The primary structure comprises 190 residues: 6,7-dimethyl-8-ribityllumazine synthase (190 aa).

5-amino-6-(D-ribitylamino)uracil-binding positions include Phe-23, 61–63, and 85–87; these read SFE and AVI. 90–91 serves as a coordination point for (2S)-2-hydroxy-3-oxobutyl phosphate; that stretch reads QT. The active-site Proton donor is His-93. Phe-118 lines the 5-amino-6-(D-ribitylamino)uracil pocket. A (2S)-2-hydroxy-3-oxobutyl phosphate-binding site is contributed by Arg-132.

This sequence belongs to the DMRL synthase family.

It catalyses the reaction (2S)-2-hydroxy-3-oxobutyl phosphate + 5-amino-6-(D-ribitylamino)uracil = 6,7-dimethyl-8-(1-D-ribityl)lumazine + phosphate + 2 H2O + H(+). It participates in cofactor biosynthesis; riboflavin biosynthesis; riboflavin from 2-hydroxy-3-oxobutyl phosphate and 5-amino-6-(D-ribitylamino)uracil: step 1/2. In terms of biological role, catalyzes the formation of 6,7-dimethyl-8-ribityllumazine by condensation of 5-amino-6-(D-ribitylamino)uracil with 3,4-dihydroxy-2-butanone 4-phosphate. This is the penultimate step in the biosynthesis of riboflavin. The sequence is that of 6,7-dimethyl-8-ribityllumazine synthase from Trichormus variabilis (strain ATCC 29413 / PCC 7937) (Anabaena variabilis).